The sequence spans 82 residues: Turripeptide Gdm9.1 (82 aa).

The signal sequence occupies residues 1–23 (MMAKLMITVMMVLLLSLQQGADG). Positions 24 to 46 (RSERWRKNQMAASRIMRNLITAR) are excised as a propeptide. 2 positions are modified to 4-hydroxyproline: Pro-49 and Pro-50. Cystine bridges form between Cys-53–Cys-68, Cys-58–Cys-72, and Cys-64–Cys-79. 4-carboxyglutamate occurs at positions 60 and 63.

It belongs to the Pg turripeptide superfamily. Expressed by the venom duct.

It localises to the secreted. This chain is Turripeptide Gdm9.1, found in Gemmula diomedea (Gem-turris).